We begin with the raw amino-acid sequence, 484 residues long: Probable cytochrome P450 316a1 (484 aa).

C433 contributes to the heme binding site.

The protein belongs to the cytochrome P450 family. Heme is required as a cofactor.

The protein resides in the endoplasmic reticulum membrane. It localises to the microsome membrane. Its function is as follows. May be involved in the metabolism of insect hormones and in the breakdown of synthetic insecticides. The polypeptide is Probable cytochrome P450 316a1 (Cyp316a1) (Drosophila melanogaster (Fruit fly)).